Reading from the N-terminus, the 260-residue chain is Adenosylcobinamide-GDP ribazoletransferase (260 aa).

Helical transmembrane passes span isoleucine 31 to isoleucine 51, isoleucine 55 to isoleucine 75, valine 111 to valine 131, phenylalanine 140 to tyrosine 160, isoleucine 177 to threonine 197, phenylalanine 202 to phenylalanine 222, and histidine 234 to glutamate 254.

This sequence belongs to the CobS family. Requires Mg(2+) as cofactor.

Its subcellular location is the cell inner membrane. It catalyses the reaction alpha-ribazole + adenosylcob(III)inamide-GDP = adenosylcob(III)alamin + GMP + H(+). The enzyme catalyses alpha-ribazole 5'-phosphate + adenosylcob(III)inamide-GDP = adenosylcob(III)alamin 5'-phosphate + GMP + H(+). It participates in cofactor biosynthesis; adenosylcobalamin biosynthesis; adenosylcobalamin from cob(II)yrinate a,c-diamide: step 7/7. Functionally, joins adenosylcobinamide-GDP and alpha-ribazole to generate adenosylcobalamin (Ado-cobalamin). Also synthesizes adenosylcobalamin 5'-phosphate from adenosylcobinamide-GDP and alpha-ribazole 5'-phosphate. The polypeptide is Adenosylcobinamide-GDP ribazoletransferase (Thermodesulfovibrio yellowstonii (strain ATCC 51303 / DSM 11347 / YP87)).